An 88-amino-acid chain; its full sequence is Small ribosomal subunit protein bS16 (88 aa).

This sequence belongs to the bacterial ribosomal protein bS16 family.

The chain is Small ribosomal subunit protein bS16 from Geotalea daltonii (strain DSM 22248 / JCM 15807 / FRC-32) (Geobacter daltonii).